Consider the following 212-residue polypeptide: MKSNKKILFIGAPGSGKGTISKILVEKYKLVHISTGDLFRKKISEDSQFAAQIQNYLSSGSYVPDEITNKLVADFIKKIPKNQGYILDGYPRTLQQLEFMIKNGINLDCVFYLKIKNETIISRLSQRLFCQKCQKSYNLLLAKPKNGLKCDLDNTDLITRNDDRPEIITHRIEKFNNSVIPIVEFFKKSGIIYYLDAEQTLEETVIEIEKWL.

Gly-14–Thr-19 lines the ATP pocket. Residues Ser-34–Val-63 form an NMP region. Residues Thr-35, Arg-40, Ser-61–Val-63, Gly-89–Arg-92, and Gln-96 each bind AMP. The interval Gln-126–Asp-163 is LID. Position 127 (Arg-127) interacts with ATP. Residues Cys-130 and Cys-133 each contribute to the Zn(2+) site. Ser-136–Tyr-137 lines the ATP pocket. Residues Cys-150 and Asp-153 each coordinate Zn(2+). AMP contacts are provided by Arg-160 and Arg-171. Gln-199 lines the ATP pocket.

This sequence belongs to the adenylate kinase family. Monomer.

Its subcellular location is the cytoplasm. It carries out the reaction AMP + ATP = 2 ADP. Its pathway is purine metabolism; AMP biosynthesis via salvage pathway; AMP from ADP: step 1/1. Its function is as follows. Catalyzes the reversible transfer of the terminal phosphate group between ATP and AMP. Plays an important role in cellular energy homeostasis and in adenine nucleotide metabolism. In Mesomycoplasma hyopneumoniae (strain 7448) (Mycoplasma hyopneumoniae), this protein is Adenylate kinase.